The sequence spans 253 residues: E3 ubiquitin-protein ligase MARCHF3 (253 aa).

Residues 63–123 (SPFNDRPMCR…ELCHFRFAVE (61 aa)) form an RING-CH-type zinc finger. Zn(2+) contacts are provided by Cys71, Cys74, Cys87, Cys89, His97, Cys100, Cys113, and Cys116. The next 2 membrane-spanning stretches (helical) occupy residues 145-165 (LFGDMVCFLFITPLATISGWL) and 182-202 (AVGLIALTVALFTIYLFWTLV). Phosphoserine occurs at positions 237 and 243.

Interacts with MARCHF2 and STX6.

Its subcellular location is the cytoplasmic vesicle membrane. The protein localises to the early endosome membrane. It carries out the reaction S-ubiquitinyl-[E2 ubiquitin-conjugating enzyme]-L-cysteine + [acceptor protein]-L-lysine = [E2 ubiquitin-conjugating enzyme]-L-cysteine + N(6)-ubiquitinyl-[acceptor protein]-L-lysine.. The protein operates within protein modification; protein ubiquitination. Its function is as follows. E3 ubiquitin-protein ligase which may be involved in endosomal trafficking. E3 ubiquitin ligases accept ubiquitin from an E2 ubiquitin-conjugating enzyme in the form of a thioester and then directly transfer the ubiquitin to targeted substrates. The sequence is that of E3 ubiquitin-protein ligase MARCHF3 from Homo sapiens (Human).